The following is a 405-amino-acid chain: Phosphopentomutase (405 aa).

The Mn(2+) site is built by Asp-10, Asp-303, His-308, Asp-344, His-345, and His-356.

It belongs to the phosphopentomutase family. Requires Mn(2+) as cofactor.

It is found in the cytoplasm. The catalysed reaction is 2-deoxy-alpha-D-ribose 1-phosphate = 2-deoxy-D-ribose 5-phosphate. It catalyses the reaction alpha-D-ribose 1-phosphate = D-ribose 5-phosphate. Its pathway is carbohydrate degradation; 2-deoxy-D-ribose 1-phosphate degradation; D-glyceraldehyde 3-phosphate and acetaldehyde from 2-deoxy-alpha-D-ribose 1-phosphate: step 1/2. In terms of biological role, isomerase that catalyzes the conversion of deoxy-ribose 1-phosphate (dRib-1-P) and ribose 1-phosphate (Rib-1-P) to deoxy-ribose 5-phosphate (dRib-5-P) and ribose 5-phosphate (Rib-5-P), respectively. The protein is Phosphopentomutase of Shewanella loihica (strain ATCC BAA-1088 / PV-4).